Consider the following 284-residue polypeptide: Probable ADP-ribose 1''-phosphate phosphatase YML087W (284 aa).

Positions 23, 55, 80, and 90 each coordinate substrate. One can recognise a Macro domain in the interval 34-230 (ESIPHAYIQN…HISKELKNVL (197 aa)). Catalysis depends on residues asparagine 80 and aspartate 90. Cysteine 128 and cysteine 136 are oxidised to a cystine. The active site involves histidine 145. Substrate contacts are provided by threonine 148 and threonine 195.

As to quaternary structure, homodimer.

It catalyses the reaction ADP-alpha-D-ribose 1''-phosphate + H2O = ADP-D-ribose + phosphate. Its function is as follows. Highly specific phosphatase involved in the metabolism of ADP-ribose 1''-phosphate (Appr1p) which is produced as a consequence of tRNA splicing. + phosphate. The sequence is that of Probable ADP-ribose 1''-phosphate phosphatase YML087W from Saccharomyces cerevisiae (strain ATCC 204508 / S288c) (Baker's yeast).